The primary structure comprises 504 residues: MEEFQGYLELDRSRQHDFLYPLLFREYIYALAHDHVLLNRSIFFENAGYYNKSSSIIVKRLITRMYQQNXLIFSANDSIQNPFFGHNNNLYSQIFSEGFAVIVEIPFSLRLVSSLERKEIAKSHNLRSIHSIFPFLEDKFSHLDYVLDVLMPYHIHLEILVQTLRYWVKDASSLHLLRFFLHEYWNSLITPKKHIPIFSKGNPRLFLFLYNSHMCEYESILLFLRNQSSHLRSTSSGIFFERIYFYVKIEHFAKXFFDNDFQCILWFFKDPFMHYVKYQGKSILASKDTPLFMNKWKYYLVNLWQYHFYAWFQPGRININQLCNYSIDFLGYRSSVRLNSSVVRSQMLENSFIINNAIKKFETIVPIIPLIGSLSKANFCNTLGHPISKPTRADSSDSDIIDRFLRICRNLSHYHSGSSKKKSLYRVKYILRLSCVKTLARKHKRTVRTFLKRLGSEFLEEFLTEEEVVLSLIFPRTYSTSRRLYRGQIWYLDITSINDLVNYE.

This sequence belongs to the intron maturase 2 family. MatK subfamily.

The protein localises to the plastid. It localises to the chloroplast. In terms of biological role, usually encoded in the trnK tRNA gene intron. Probably assists in splicing its own and other chloroplast group II introns. The chain is Maturase K from Calyptranthes pallens (Spicewood).